A 399-amino-acid chain; its full sequence is MTKKRHLFTSESVTEGHPDKICDQISDSILDAILSKDANARVACETTVTTGLVLVAGEITTSTYVDIPKIVRETIQGIGYTRAKYGFDAETCAVLTSIDEQSADIAMGVDQALEAREGQMTDAEIEAIGAGDQGLMFGFACNETQELMPLPISLAHKLARRLTEVRKDDTLSYLRPDGKTQVTVEYDENGKPVRVDTIVISTQHHPDVTWEEIDRDLKEHVIKAVVPAELMDGETKFFINPTGRFVIGGPQGDAGLTGRKIIVDTYGGYARHGGGAFSGKDATKVDRSAAYAARYVAKNIVAAGLADKAEVQLAYAIGVAQPVSISVDTFGTGKVSEDVLVELVRNNFDLRPAGIIKMLDLRRPIYKQTAAYGHFGRTDVDLSWERTDKAAALKEQAGL.

Residue histidine 17 coordinates ATP. Aspartate 19 provides a ligand contact to Mg(2+). Glutamate 45 lines the K(+) pocket. Residues glutamate 58 and glutamine 101 each coordinate L-methionine. A flexible loop region spans residues 101–111 (QSADIAMGVDQ). ATP-binding positions include 177–179 (DGK), 244–245 (RF), aspartate 253, 259–260 (RK), alanine 276, and lysine 280. Aspartate 253 is a binding site for L-methionine. An L-methionine-binding site is contributed by lysine 284.

This sequence belongs to the AdoMet synthase family. As to quaternary structure, homotetramer; dimer of dimers. Mg(2+) serves as cofactor. It depends on K(+) as a cofactor.

The protein localises to the cytoplasm. The enzyme catalyses L-methionine + ATP + H2O = S-adenosyl-L-methionine + phosphate + diphosphate. It functions in the pathway amino-acid biosynthesis; S-adenosyl-L-methionine biosynthesis; S-adenosyl-L-methionine from L-methionine: step 1/1. Catalyzes the formation of S-adenosylmethionine (AdoMet) from methionine and ATP. The overall synthetic reaction is composed of two sequential steps, AdoMet formation and the subsequent tripolyphosphate hydrolysis which occurs prior to release of AdoMet from the enzyme. The polypeptide is S-adenosylmethionine synthase (Bacillus cereus (strain G9842)).